The chain runs to 355 residues: 3-isopropylmalate dehydrogenase (355 aa).

Residue glycine 77 to glutamate 90 participates in NAD(+) binding. Substrate is bound by residues arginine 97, arginine 107, arginine 135, and aspartate 220. Mg(2+)-binding residues include aspartate 220, aspartate 244, and aspartate 248. An NAD(+)-binding site is contributed by glycine 277 to asparagine 289.

This sequence belongs to the isocitrate and isopropylmalate dehydrogenases family. LeuB type 1 subfamily. In terms of assembly, homodimer. It depends on Mg(2+) as a cofactor. Requires Mn(2+) as cofactor.

The protein resides in the cytoplasm. The catalysed reaction is (2R,3S)-3-isopropylmalate + NAD(+) = 4-methyl-2-oxopentanoate + CO2 + NADH. The protein operates within amino-acid biosynthesis; L-leucine biosynthesis; L-leucine from 3-methyl-2-oxobutanoate: step 3/4. In terms of biological role, catalyzes the oxidation of 3-carboxy-2-hydroxy-4-methylpentanoate (3-isopropylmalate) to 3-carboxy-4-methyl-2-oxopentanoate. The product decarboxylates to 4-methyl-2 oxopentanoate. This Sulfurimonas denitrificans (strain ATCC 33889 / DSM 1251) (Thiomicrospira denitrificans (strain ATCC 33889 / DSM 1251)) protein is 3-isopropylmalate dehydrogenase.